The primary structure comprises 384 residues: MKRISILGVTGSIGTQTLDVLRFHKEDFELVGITANRNIELTMDIIKEFSPKYVAINHEESYKKLVDLVKSEGLKCEVIYGMEGLVKVATLDEIDIVVTSVVGMIGLKPTVEAIRKGKNIALANKETLVVAGELVMREAKENGVKILAVDSEHSAIFQSLQGNAHNKIDKILLTASGGPFRGFTIKDLKSVTPERALKHPKWNMGQKISIDSSTLMNKGLEVIEAHWLFDCPYKDIEVVVHPQSIIHSMVQYTDGAVIAQLGVPDMKLPIQYALNYPNREGNISEKLDLFKIRELTFEKPDLDTFKCLKLAYEAGEKGKLMPTILNGANEVCVELFLNKKITYLQIPEIIEECMNTFDYNKEVTLDNVINLDKEVRQYIYEKYN.

NADPH contacts are provided by Thr-10, Gly-11, Ser-12, Ile-13, Arg-37, Asn-38, and Asn-124. Lys-125 provides a ligand contact to 1-deoxy-D-xylulose 5-phosphate. Glu-126 lines the NADPH pocket. Mn(2+) is bound at residue Asp-150. 1-deoxy-D-xylulose 5-phosphate contacts are provided by Ser-151, Glu-152, Ser-176, and His-199. Glu-152 serves as a coordination point for Mn(2+). Residue Gly-205 coordinates NADPH. The 1-deoxy-D-xylulose 5-phosphate site is built by Ser-212, Asn-217, Lys-218, and Glu-221. Glu-221 is a binding site for Mn(2+).

This sequence belongs to the DXR family. Requires Mg(2+) as cofactor. It depends on Mn(2+) as a cofactor.

The enzyme catalyses 2-C-methyl-D-erythritol 4-phosphate + NADP(+) = 1-deoxy-D-xylulose 5-phosphate + NADPH + H(+). The protein operates within isoprenoid biosynthesis; isopentenyl diphosphate biosynthesis via DXP pathway; isopentenyl diphosphate from 1-deoxy-D-xylulose 5-phosphate: step 1/6. Functionally, catalyzes the NADPH-dependent rearrangement and reduction of 1-deoxy-D-xylulose-5-phosphate (DXP) to 2-C-methyl-D-erythritol 4-phosphate (MEP). This Clostridium perfringens (strain SM101 / Type A) protein is 1-deoxy-D-xylulose 5-phosphate reductoisomerase.